Here is a 229-residue protein sequence, read N- to C-terminus: Heptaprenylglyceryl phosphate synthase (229 aa).

Residue K12 coordinates sn-glycerol 1-phosphate. D14 and S40 together coordinate Mg(2+). Sn-glycerol 1-phosphate-binding positions include 159–164 (YLEYSG), G189, and 209–210 (GN).

The protein belongs to the GGGP/HepGP synthase family. Group I subfamily. In terms of assembly, homodimer. The cofactor is Mg(2+).

It carries out the reaction sn-glycerol 1-phosphate + all-trans-heptaprenyl diphosphate = 3-heptaprenyl-sn-glycero-1-phosphate + diphosphate. The protein operates within membrane lipid metabolism; glycerophospholipid metabolism. Prenyltransferase that catalyzes in vivo the transfer of the heptaprenyl moiety of heptaprenyl pyrophosphate (HepPP; 35 carbon atoms) to the C3 hydroxyl of sn-glycerol-1-phosphate (G1P), producing heptaprenylglyceryl phosphate (HepGP). This reaction is an ether-bond-formation step in the biosynthesis of archaea-type G1P-based membrane lipids found in Bacillales. This is Heptaprenylglyceryl phosphate synthase from Bacillus cereus (strain G9842).